Here is a 407-residue protein sequence, read N- to C-terminus: E3 ubiquitin-protein ligase TRIM13 (407 aa).

The segment at 10-58 (CPICCSLFDDPRVLPCSHNFCKKCLEGILEGSVRNSLWRPAPFKCPTCR) adopts an RING-type zinc-finger fold. The segment at 89–131 (PKMPVCKGHLGQPLNIFCLTDMQLICGICATRGEHTKHVFCSI) adopts a B box-type zinc-finger fold. 4 residues coordinate Zn(2+): C94, H97, C117, and H123. The stretch at 172–200 (LQLLTKDSDKVKEFFEKLQHTLDQKKNEI) forms a coiled coil. The helical transmembrane segment at 317–337 (LFLLILLLGLVIVFGPTMFLE) threads the bilayer.

This sequence belongs to the TRIM/RBCC family. As to quaternary structure, interacts (via C-terminal domain) with VCP. Interacts with AKT1; the interaction ubiquitinates AKT1 and leads to its proteasomal degradation. Interacts with MDM2; the interaction ubiquitinates AKT1 and leads to its proteasomal degradation. Interacts with p62/SQSTM1. Interacts with TRAF6. Interacts with IKBKG/NEMO. In terms of processing, auto-ubiquitinated; requires the RING-type zinc finger. Auto-polyubiquitination leads to proteasomal degradation.

Its subcellular location is the endoplasmic reticulum membrane. It catalyses the reaction S-ubiquitinyl-[E2 ubiquitin-conjugating enzyme]-L-cysteine + [acceptor protein]-L-lysine = [E2 ubiquitin-conjugating enzyme]-L-cysteine + N(6)-ubiquitinyl-[acceptor protein]-L-lysine.. It participates in protein modification; protein ubiquitination. Endoplasmic reticulum (ER) membrane anchored E3 ligase involved in the retrotranslocation and turnover of membrane and secretory proteins from the ER through a set of processes named ER-associated degradation (ERAD). This process acts on misfolded proteins as well as in the regulated degradation of correctly folded proteins. Enhances ionizing radiation-induced p53/TP53 stability and apoptosis via ubiquitinating MDM2 and AKT1 and decreasing AKT1 kinase activity through MDM2 and AKT1 proteasomal degradation. Regulates ER stress-induced autophagy, and may act as a tumor suppressor. Also plays a role in innate immune response by stimulating NF-kappa-B activity in the TLR2 signaling pathway. Ubiquitinates TRAF6 via the 'Lys-29'-linked polyubiquitination chain resulting in NF-kappa-B activation. Participates as well in T-cell receptor-mediated NF-kappa-B activation. In the presence of TNF, modulates the IKK complex by regulating IKBKG/NEMO ubiquitination leading to the repression of NF-kappa-B. The chain is E3 ubiquitin-protein ligase TRIM13 (TRIM13) from Homo sapiens (Human).